The sequence spans 345 residues: UDP-N-acetylenolpyruvoylglucosamine reductase (345 aa).

Residues 16–186 form the FAD-binding PCMH-type domain; the sequence is LSVSASCIKV…TAVGIFLKKE (171 aa). The active site involves Arg162. The active-site Proton donor is the Ser232. Glu328 is a catalytic residue.

It belongs to the MurB family. FAD serves as cofactor.

It is found in the cytoplasm. It carries out the reaction UDP-N-acetyl-alpha-D-muramate + NADP(+) = UDP-N-acetyl-3-O-(1-carboxyvinyl)-alpha-D-glucosamine + NADPH + H(+). It functions in the pathway cell wall biogenesis; peptidoglycan biosynthesis. Its function is as follows. Cell wall formation. The sequence is that of UDP-N-acetylenolpyruvoylglucosamine reductase from Pectobacterium atrosepticum (strain SCRI 1043 / ATCC BAA-672) (Erwinia carotovora subsp. atroseptica).